The sequence spans 634 residues: Probable sulfate transporter 3.5 (634 aa).

Residues 1-12 (MENTITSSTSSP) show a composition bias toward polar residues. Residues 1 to 25 (MENTITSSTSSPKGRGVNFSTPRGF) form a disordered region. The Cytoplasmic segment spans residues 1–81 (MENTITSSTS…KYDMQKLKYD (81 aa)). A helical transmembrane segment spans residues 82 to 102 (VLAGITITSLAVPQGISYAKL). Topologically, residues 103–104 (AS) are extracellular. The helical transmembrane segment at 105-125 (IPPIIGLYSSFVPPFVYAVFG) threads the bilayer. Topologically, residues 126 to 130 (SSNNL) are cytoplasmic. The chain crosses the membrane as a helical span at residues 131–151 (AVGTVAACSLLIAETFGEEMI). The Extracellular portion of the chain corresponds to 152–158 (KNEPELY). A helical membrane pass occupies residues 159-179 (LHLIFTATLITGLFQFAMGFL). At 180-195 (RLGILVDFLSHSTITG) the chain is on the cytoplasmic side. A helical transmembrane segment spans residues 196 to 216 (FMGGTAIIILLQQLKGIFGLV). At 217-239 (HFTHKTDVVSVLHSILDNRAEWK) the chain is on the extracellular side. The chain crosses the membrane as a helical span at residues 240 to 260 (WQSTLAGVCFLVFLQSTRYIK). Residues 261 to 265 (QRYPK) lie on the Cytoplasmic side of the membrane. Residues 266-286 (LFWVSAMGPMVVVVVGCVVAY) traverse the membrane as a helical segment. The Extracellular segment spans residues 287 to 321 (LVKGTAHGIATVGPLKKGLNPPSIQLLNFDSKYLG). The helical transmembrane segment at 322-342 (MVFKAGIVTGLIALAEGIAIG) threads the bilayer. Residues 343–358 (RSFAVMKNEQTDGNKE) lie on the Cytoplasmic side of the membrane. The chain crosses the membrane as a helical span at residues 359–379 (MIAFGLMNVIGSFTSCYLTTG). The Extracellular portion of the chain corresponds to 380-395 (PFSKTAVNYNAGTKTP). The helical transmembrane segment at 396-416 (MSNVVMGVCMMLVLLFLAPLF) threads the bilayer. The Cytoplasmic portion of the chain corresponds to 417–420 (SYTP). Residues 421 to 441 (LVGLSAIIMSAMLGLINYEEM) form a helical membrane-spanning segment. Topologically, residues 442 to 458 (YHLFKVDKFDFLVCMSA) are extracellular. Residues 459-479 (FFGVSFLSMDYGLIISVGFSI) form a helical membrane-spanning segment. The Cytoplasmic segment spans residues 480–634 (VRALLYVARP…FNLTTTKPEV (155 aa)). The 116-residue stretch at 508 to 623 (QYPASEEMLG…LSIDDAVQAC (116 aa)) folds into the STAS domain.

The protein belongs to the SLC26A/SulP transporter (TC 2.A.53) family.

Its subcellular location is the membrane. Its function is as follows. H(+)/sulfate cotransporter that may play a role in the regulation of sulfate assimilation. The sequence is that of Probable sulfate transporter 3.5 (SULTR3;5) from Arabidopsis thaliana (Mouse-ear cress).